Here is a 341-residue protein sequence, read N- to C-terminus: MKKPELTATSVEKFLIEKFDSVSDLMQLSEGEESRAFSFDVGGRGYVLRVNSCADGFYKDRYVYRHFASAALPIPEVLDIGEFSESLTYCISRRAQGVTLQDLPETELPAVLQPVAEAMDAIAAADLSQTSGFGPFGPQGIGQYTTWRDFICAIADPHVYHWQTVMDDTVSASVAQALDELMLWAEDCPEVRHLVHADFGSNNVLTDNGRITAVIDWSEAMFGDSQYEVANIFFWRPWLACMEQQTRYFERRHPELAGSPRLRAYMLRIGLDQLYQSLVDGNFDDAAWAQGRCDAIVRSGAGTVGRTQIARRSAAVWTDGCVEVLADSGNRRPSTRPRAKE.

The active-site Proton acceptor is Asp198.

It belongs to the aminoglycoside phosphotransferase family.

The enzyme catalyses hygromycin B + ATP = 4-O-phosphohygromycin B + ADP + H(+). The aminoglycoside phosphotransferases achieve inactivation of their antibiotic substrates by phosphorylation. Only phosphorylates hygromycin and closely related compounds such as demethyl analogs and destomycin. This is Hygromycin-B 4-O-kinase (hph) from Escherichia coli.